Reading from the N-terminus, the 395-residue chain is Pyruvate synthase subunit PorA (395 aa).

In terms of assembly, heterotetramer of one alpha, one beta, one delta and one gamma chain.

The enzyme catalyses 2 oxidized [2Fe-2S]-[ferredoxin] + pyruvate + CoA = 2 reduced [2Fe-2S]-[ferredoxin] + acetyl-CoA + CO2 + H(+). The polypeptide is Pyruvate synthase subunit PorA (porA) (Pyrococcus horikoshii (strain ATCC 700860 / DSM 12428 / JCM 9974 / NBRC 100139 / OT-3)).